Reading from the N-terminus, the 565-residue chain is Putative serine protease pcp-1 (565 aa).

The N-terminal stretch at 1–17 is a signal peptide; sequence MRWFLVLLLVALVSVEA. N-linked (GlcNAc...) asparagine glycans are attached at residues asparagine 69, asparagine 107, and asparagine 126. Residue serine 177 is the Charge relay system of the active site. N-linked (GlcNAc...) asparagine glycosylation is found at asparagine 240, asparagine 244, asparagine 257, asparagine 271, asparagine 319, and asparagine 347. Residues aspartate 451 and histidine 479 each act as charge relay system in the active site.

The protein belongs to the peptidase S28 family.

The protein is Putative serine protease pcp-1 (pcp-1) of Caenorhabditis elegans.